The sequence spans 302 residues: Acetaldehyde dehydrogenase 2 (302 aa).

The Acyl-thioester intermediate role is filled by Cys-130. NAD(+) is bound by residues 161–169 and Asn-272; that span reads SVGPGTRRN.

This sequence belongs to the acetaldehyde dehydrogenase family.

It carries out the reaction acetaldehyde + NAD(+) + CoA = acetyl-CoA + NADH + H(+). The sequence is that of Acetaldehyde dehydrogenase 2 from Cupriavidus necator (strain ATCC 17699 / DSM 428 / KCTC 22496 / NCIMB 10442 / H16 / Stanier 337) (Ralstonia eutropha).